The sequence spans 362 residues: UDP-N-acetylglucosamine--N-acetylmuramyl-(pentapeptide) pyrophosphoryl-undecaprenol N-acetylglucosamine transferase (362 aa).

UDP-N-acetyl-alpha-D-glucosamine-binding positions include 15-17, Asn-127, Arg-165, Ser-191, Ile-247, 266-271, and Gln-292; these read TGG and ALTVSE.

Belongs to the glycosyltransferase 28 family. MurG subfamily.

The protein localises to the cell inner membrane. It carries out the reaction di-trans,octa-cis-undecaprenyl diphospho-N-acetyl-alpha-D-muramoyl-L-alanyl-D-glutamyl-meso-2,6-diaminopimeloyl-D-alanyl-D-alanine + UDP-N-acetyl-alpha-D-glucosamine = di-trans,octa-cis-undecaprenyl diphospho-[N-acetyl-alpha-D-glucosaminyl-(1-&gt;4)]-N-acetyl-alpha-D-muramoyl-L-alanyl-D-glutamyl-meso-2,6-diaminopimeloyl-D-alanyl-D-alanine + UDP + H(+). The protein operates within cell wall biogenesis; peptidoglycan biosynthesis. Cell wall formation. Catalyzes the transfer of a GlcNAc subunit on undecaprenyl-pyrophosphoryl-MurNAc-pentapeptide (lipid intermediate I) to form undecaprenyl-pyrophosphoryl-MurNAc-(pentapeptide)GlcNAc (lipid intermediate II). The polypeptide is UDP-N-acetylglucosamine--N-acetylmuramyl-(pentapeptide) pyrophosphoryl-undecaprenol N-acetylglucosamine transferase (Shewanella putrefaciens (strain CN-32 / ATCC BAA-453)).